A 454-amino-acid polypeptide reads, in one-letter code: Bifunctional protein GlmU (454 aa).

A pyrophosphorylase region spans residues methionine 1–arginine 226. Residues leucine 8–glycine 11, lysine 22, glutamine 73, glycine 78–threonine 79, tyrosine 100–aspartate 102, glycine 137, glutamate 151, asparagine 166, and asparagine 224 each bind UDP-N-acetyl-alpha-D-glucosamine. Aspartate 102 contributes to the Mg(2+) binding site. Asparagine 224 is a Mg(2+) binding site. A linker region spans residues leucine 227–glutamine 247. An N-acetyltransferase region spans residues glycine 248 to lysine 454. Residues arginine 330 and lysine 348 each contribute to the UDP-N-acetyl-alpha-D-glucosamine site. The active-site Proton acceptor is histidine 360. Positions 363 and 374 each coordinate UDP-N-acetyl-alpha-D-glucosamine. Residues alanine 377, asparagine 383–tyrosine 384, serine 402, alanine 420, and arginine 437 contribute to the acetyl-CoA site.

This sequence in the N-terminal section; belongs to the N-acetylglucosamine-1-phosphate uridyltransferase family. The protein in the C-terminal section; belongs to the transferase hexapeptide repeat family. As to quaternary structure, homotrimer. Requires Mg(2+) as cofactor.

It is found in the cytoplasm. The catalysed reaction is alpha-D-glucosamine 1-phosphate + acetyl-CoA = N-acetyl-alpha-D-glucosamine 1-phosphate + CoA + H(+). It catalyses the reaction N-acetyl-alpha-D-glucosamine 1-phosphate + UTP + H(+) = UDP-N-acetyl-alpha-D-glucosamine + diphosphate. It participates in nucleotide-sugar biosynthesis; UDP-N-acetyl-alpha-D-glucosamine biosynthesis; N-acetyl-alpha-D-glucosamine 1-phosphate from alpha-D-glucosamine 6-phosphate (route II): step 2/2. The protein operates within nucleotide-sugar biosynthesis; UDP-N-acetyl-alpha-D-glucosamine biosynthesis; UDP-N-acetyl-alpha-D-glucosamine from N-acetyl-alpha-D-glucosamine 1-phosphate: step 1/1. It functions in the pathway bacterial outer membrane biogenesis; LPS lipid A biosynthesis. Catalyzes the last two sequential reactions in the de novo biosynthetic pathway for UDP-N-acetylglucosamine (UDP-GlcNAc). The C-terminal domain catalyzes the transfer of acetyl group from acetyl coenzyme A to glucosamine-1-phosphate (GlcN-1-P) to produce N-acetylglucosamine-1-phosphate (GlcNAc-1-P), which is converted into UDP-GlcNAc by the transfer of uridine 5-monophosphate (from uridine 5-triphosphate), a reaction catalyzed by the N-terminal domain. This Acinetobacter baumannii (strain ACICU) protein is Bifunctional protein GlmU.